The primary structure comprises 393 residues: NAD(P)H-quinone oxidoreductase subunit H, chloroplastic (393 aa).

This sequence belongs to the complex I 49 kDa subunit family. NDH is composed of at least 16 different subunits, 5 of which are encoded in the nucleus.

It is found in the plastid. Its subcellular location is the chloroplast thylakoid membrane. It catalyses the reaction a plastoquinone + NADH + (n+1) H(+)(in) = a plastoquinol + NAD(+) + n H(+)(out). The enzyme catalyses a plastoquinone + NADPH + (n+1) H(+)(in) = a plastoquinol + NADP(+) + n H(+)(out). In terms of biological role, NDH shuttles electrons from NAD(P)H:plastoquinone, via FMN and iron-sulfur (Fe-S) centers, to quinones in the photosynthetic chain and possibly in a chloroplast respiratory chain. The immediate electron acceptor for the enzyme in this species is believed to be plastoquinone. Couples the redox reaction to proton translocation, and thus conserves the redox energy in a proton gradient. This is NAD(P)H-quinone oxidoreductase subunit H, chloroplastic from Solanum tuberosum (Potato).